Consider the following 474-residue polypeptide: Trigger factor (474 aa).

Residues 174-261 enclose the PPIase FKBP-type domain; it reads GDIAVVSFKG…LKDLKEKELP (88 aa). Residues 435–474 form a disordered region; it reads VKEKTTKTSKATKTSKTTKATKTASKTTKTTKTQNKKEKK. Over residues 442 to 467 the composition is skewed to low complexity; the sequence is TSKATKTSKTTKATKTASKTTKTTKT.

This sequence belongs to the FKBP-type PPIase family. Tig subfamily.

The protein resides in the cytoplasm. The catalysed reaction is [protein]-peptidylproline (omega=180) = [protein]-peptidylproline (omega=0). Its function is as follows. Involved in protein export. Acts as a chaperone by maintaining the newly synthesized protein in an open conformation. Functions as a peptidyl-prolyl cis-trans isomerase. The sequence is that of Trigger factor from Prochlorococcus marinus (strain AS9601).